The primary structure comprises 280 residues: Dermonecrotic toxin LsSicTox-alphaIA1 (280 aa).

The active site involves His-12. Glu-32 and Asp-34 together coordinate Mg(2+). The active-site Nucleophile is His-48. Intrachain disulfides connect Cys-52–Cys-58 and Cys-54–Cys-197. Asp-92 lines the Mg(2+) pocket.

This sequence belongs to the arthropod phospholipase D family. Class II subfamily. Requires Mg(2+) as cofactor. Expressed by the venom gland.

The protein localises to the secreted. The catalysed reaction is an N-(acyl)-sphingosylphosphocholine = an N-(acyl)-sphingosyl-1,3-cyclic phosphate + choline. It carries out the reaction an N-(acyl)-sphingosylphosphoethanolamine = an N-(acyl)-sphingosyl-1,3-cyclic phosphate + ethanolamine. It catalyses the reaction a 1-acyl-sn-glycero-3-phosphocholine = a 1-acyl-sn-glycero-2,3-cyclic phosphate + choline. The enzyme catalyses a 1-acyl-sn-glycero-3-phosphoethanolamine = a 1-acyl-sn-glycero-2,3-cyclic phosphate + ethanolamine. Its function is as follows. Dermonecrotic toxins cleave the phosphodiester linkage between the phosphate and headgroup of certain phospholipids (sphingolipid and lysolipid substrates), forming an alcohol (often choline) and a cyclic phosphate. This toxin acts on sphingomyelin (SM). It may also act on ceramide phosphoethanolamine (CPE), lysophosphatidylcholine (LPC) and lysophosphatidylethanolamine (LPE), but not on lysophosphatidylserine (LPS), and lysophosphatidylglycerol (LPG). It acts by transphosphatidylation, releasing exclusively cyclic phosphate products as second products. Induces dermonecrosis, hemolysis, increased vascular permeability, edema, inflammatory response, and platelet aggregation. The polypeptide is Dermonecrotic toxin LsSicTox-alphaIA1 (Loxosceles similis (Brazilian brown spider)).